Here is a 278-residue protein sequence, read N- to C-terminus: HTH-type transcriptional regulator TsaQ1/TsaQ2 (278 aa).

The region spanning Val-19 to Ala-80 is the HTH iclR-type domain. The H-T-H motif DNA-binding region spans Asn-40 to Ser-59. The IclR-ED domain occupies Leu-95–Ala-266.

Both copies function as additional regulators for the tsa locus, specifically for tsaT. The polypeptide is HTH-type transcriptional regulator TsaQ1/TsaQ2 (tsaQ1) (Comamonas testosteroni (Pseudomonas testosteroni)).